The chain runs to 205 residues: MKKTNDNYHSARFVMSAPNIHHLPPDQGMEVAFAGRSNAGKSSALNTLTQQKNLAKISKTPGRTQLINLFEVAEGIRLVDLPGYGYAAVPLAIKIKWQKALNEYLNKRDCLRGLVILMDIRHPLKNLDQQMIVWAINKRIPVYLLLTKVDKLSRSASKIQLDMVKEAILPFMGDIEVDVFSSLKKIGIDKLQNKLNAWFSGSVNE.

Positions 27–201 (QGMEVAFAGR…QNKLNAWFSG (175 aa)) constitute an EngB-type G domain. GTP is bound by residues 35–42 (GRSNAGKS), 62–66 (GRTQL), 80–83 (DLPG), 147–150 (TKVD), and 180–182 (FSS). Mg(2+)-binding residues include S42 and T64.

This sequence belongs to the TRAFAC class TrmE-Era-EngA-EngB-Septin-like GTPase superfamily. EngB GTPase family. Mg(2+) serves as cofactor.

Its function is as follows. Necessary for normal cell division and for the maintenance of normal septation. This Hamiltonella defensa subsp. Acyrthosiphon pisum (strain 5AT) protein is Probable GTP-binding protein EngB.